The sequence spans 388 residues: Phosphopentomutase (388 aa).

Mn(2+)-binding residues include Asp11, Asp283, His288, Asp324, His325, and His336.

Belongs to the phosphopentomutase family. It depends on Mn(2+) as a cofactor.

The protein resides in the cytoplasm. The enzyme catalyses 2-deoxy-alpha-D-ribose 1-phosphate = 2-deoxy-D-ribose 5-phosphate. The catalysed reaction is alpha-D-ribose 1-phosphate = D-ribose 5-phosphate. It functions in the pathway carbohydrate degradation; 2-deoxy-D-ribose 1-phosphate degradation; D-glyceraldehyde 3-phosphate and acetaldehyde from 2-deoxy-alpha-D-ribose 1-phosphate: step 1/2. Its function is as follows. Isomerase that catalyzes the conversion of deoxy-ribose 1-phosphate (dRib-1-P) and ribose 1-phosphate (Rib-1-P) to deoxy-ribose 5-phosphate (dRib-5-P) and ribose 5-phosphate (Rib-5-P), respectively. This chain is Phosphopentomutase, found in Enterococcus faecalis (strain ATCC 700802 / V583).